The sequence spans 581 residues: Moesin/ezrin/radixin homolog 1 (581 aa).

Residues Met-8–Arg-298 enclose the FERM domain. The segment at Gln-452–Asn-519 is disordered. Residues Ala-459–Thr-469 are compositionally biased toward low complexity. Residues Glu-477–Ile-486 show a composition bias toward acidic residues. A compositionally biased stretch (basic and acidic residues) spans Phe-495–Asn-519. At Thr-562 the chain carries Phosphothreonine.

As to quaternary structure, interacts with cytoskeletal actin.

The protein localises to the cell junction. Its subcellular location is the adherens junction. It is found in the cell projection. It localises to the microvillus. The protein resides in the rhabdomere. The protein localises to the cell membrane. Its subcellular location is the cytoplasm. It is found in the cytoskeleton. In terms of biological role, involved in connections of major cytoskeletal structures to the plasma membrane. The protein is Moesin/ezrin/radixin homolog 1 of Anopheles gambiae (African malaria mosquito).